We begin with the raw amino-acid sequence, 200 residues long: Small ribosomal subunit protein uS4 (200 aa).

The segment at 22–43 (TGKELERRPYAPGQHGPTQRKK) is disordered. The 79-residue stretch at 92 to 170 (QRLDNIVYRL…VPEYVTFDAE (79 aa)) folds into the S4 RNA-binding domain.

The protein belongs to the universal ribosomal protein uS4 family. In terms of assembly, part of the 30S ribosomal subunit. Contacts protein S5. The interaction surface between S4 and S5 is involved in control of translational fidelity.

Its function is as follows. One of the primary rRNA binding proteins, it binds directly to 16S rRNA where it nucleates assembly of the body of the 30S subunit. Functionally, with S5 and S12 plays an important role in translational accuracy. The protein is Small ribosomal subunit protein uS4 of Listeria innocua serovar 6a (strain ATCC BAA-680 / CLIP 11262).